Here is a 611-residue protein sequence, read N- to C-terminus: MQKHTPSVSCSPFPSSHKFYQQSLLFPNVRVPLRKILLTDGSGESPFNVYDTSGPYTDENVIIDITKGLPAIRIPWLSERADTESYPARLVKPEDNGFTHGKDLTPVFEKKRPILRSKNGKSITQMTYARAGIITAEMEYVAIRENEGLIEKNKQHTTSSKAFDASIPEVYTAEFVRNEIACGRAIIPQNINHPECEPMIIGRNFRVKINANIGNSAVTSSMAEEVEKMVWAIRWGADTVMDLSTGRNIHNIREWIIRNSPVPIGTVPIYQALEKVHGIAENLTWDIFRDTLIEQAEQGVDYFTIHAGLKLAFIPLTIDRTTGIVSRGGSIIAKWCLHHHKENFLYEHFDEICDIAHTYDVSLSLGDGLRPGSIADANDEAQFAELKTLGELTQIAWEKNVQTMIEGPGHVPMHKIKENMDQQLALCNEAPFYTLGPLTTDIAPGYDHITSAIGAAMIGWFGTAMLCYVTPKEHLGLPDKNDVKTGVITYKIAAHAADLAKGLPRAQLRDNTLSRARFDFRWHDQFNLSLDPDTARAFHDETMPKEAHKLAHFCSMCGPKFCSMRISHDIRDAVAIKKTRDEGMAAMAEKYQQNGDLYMKVMPSIKETVDD.

Residues asparagine 212, methionine 241, tyrosine 270, histidine 306, serine 326–glycine 328, aspartate 367–arginine 370, and glutamate 406 contribute to the substrate site. Histidine 410 is a Zn(2+) binding site. Position 433 (tyrosine 433) interacts with substrate. Histidine 474 is a binding site for Zn(2+). [4Fe-4S] cluster is bound by residues cysteine 554, cysteine 557, and cysteine 562.

Belongs to the ThiC family. Homodimer. [4Fe-4S] cluster is required as a cofactor.

The catalysed reaction is 5-amino-1-(5-phospho-beta-D-ribosyl)imidazole + S-adenosyl-L-methionine = 4-amino-2-methyl-5-(phosphooxymethyl)pyrimidine + CO + 5'-deoxyadenosine + formate + L-methionine + 3 H(+). It functions in the pathway cofactor biosynthesis; thiamine diphosphate biosynthesis. Catalyzes the synthesis of the hydroxymethylpyrimidine phosphate (HMP-P) moiety of thiamine from aminoimidazole ribotide (AIR) in a radical S-adenosyl-L-methionine (SAM)-dependent reaction. This is Phosphomethylpyrimidine synthase from Bartonella bacilliformis (strain ATCC 35685 / KC583 / Herrer 020/F12,63).